The following is a 41-amino-acid chain: MDIDFRVAIVLAPIAVAAGWAAFNIGAAAIRQVQNFLNREA.

A helical transmembrane segment spans residues 7 to 25 (VAIVLAPIAVAAGWAAFNI).

Belongs to the PsbY family. In terms of assembly, PSII is composed of 1 copy each of membrane proteins PsbA, PsbB, PsbC, PsbD, PsbE, PsbF, PsbH, PsbI, PsbJ, PsbK, PsbL, PsbM, PsbT, PsbX, PsbY, PsbZ, Psb30/Ycf12, peripheral proteins PsbO, CyanoQ (PsbQ), PsbU, PsbV and a large number of cofactors. It forms dimeric complexes.

The protein localises to the cellular thylakoid membrane. In terms of biological role, loosely associated component of the core of photosystem II (PSII), it is not always seen in crystals. PSII is a light-driven water plastoquinone oxidoreductase, using light energy to abstract electrons from H(2)O, generating a proton gradient subsequently used for ATP formation. This chain is Photosystem II reaction center protein Y, found in Nostoc sp. (strain PCC 7120 / SAG 25.82 / UTEX 2576).